A 155-amino-acid polypeptide reads, in one-letter code: Ribosome maturation factor RimP (155 aa).

This sequence belongs to the RimP family.

It localises to the cytoplasm. Functionally, required for maturation of 30S ribosomal subunits. This Prochlorococcus marinus subsp. pastoris (strain CCMP1986 / NIES-2087 / MED4) protein is Ribosome maturation factor RimP.